An 83-amino-acid polypeptide reads, in one-letter code: MRNTTFLVLNVMLLVSVALFCAADPEMEKSSFAEILDTGNPEQERKCLAEAADCSPWSGDSCCKPYLCSCIFFYPCSCRPKGW.

Positions 1–23 (MRNTTFLVLNVMLLVSVALFCAA) are cleaved as a signal peptide. The propeptide occupies 24 to 45 (DPEMEKSSFAEILDTGNPEQER). 4 disulfides stabilise this stretch: cysteine 47/cysteine 63, cysteine 54/cysteine 68, cysteine 62/cysteine 78, and cysteine 70/cysteine 76.

It belongs to the neurotoxin 07 (Beta/delta-agtx) family. As to expression, expressed by the venom gland.

The protein resides in the secreted. Its function is as follows. Inhibits sodium channels (Nav) of insects. This is U2-hexatoxin-Hi1a from Hadronyche infensa (Fraser island funnel-web spider).